The chain runs to 97 residues: MEFKHVLMILGVIILTLAPLIMYSGLGEDEGYFGGADGAAGDLIMEISPNYEPWFEPFWEPPSGEIESLLFALQAAIGAMIIGYFFGYNKAKYDDKN.

2 consecutive transmembrane segments (helical) span residues 6–26 (VLMI…YSGL) and 68–88 (SLLF…FFGY).

It belongs to the CbiN family. As to quaternary structure, forms an energy-coupling factor (ECF) transporter complex composed of an ATP-binding protein (A component, CbiO), a transmembrane protein (T component, CbiQ) and 2 possible substrate-capture proteins (S components, CbiM and CbiN) of unknown stoichimetry.

The protein localises to the cell membrane. The protein operates within cofactor biosynthesis; adenosylcobalamin biosynthesis. Functionally, part of the energy-coupling factor (ECF) transporter complex CbiMNOQ involved in cobalt import. This Methanococcus maripaludis (strain C6 / ATCC BAA-1332) protein is Cobalt transport protein CbiN.